A 932-amino-acid chain; its full sequence is Glycine dehydrogenase (decarboxylating) (932 aa).

N6-(pyridoxal phosphate)lysine is present on lysine 685.

Belongs to the GcvP family. In terms of assembly, the glycine cleavage system is composed of four proteins: P, T, L and H. Pyridoxal 5'-phosphate serves as cofactor.

The catalysed reaction is N(6)-[(R)-lipoyl]-L-lysyl-[glycine-cleavage complex H protein] + glycine + H(+) = N(6)-[(R)-S(8)-aminomethyldihydrolipoyl]-L-lysyl-[glycine-cleavage complex H protein] + CO2. Functionally, the glycine cleavage system catalyzes the degradation of glycine. The P protein binds the alpha-amino group of glycine through its pyridoxal phosphate cofactor; CO(2) is released and the remaining methylamine moiety is then transferred to the lipoamide cofactor of the H protein. The sequence is that of Glycine dehydrogenase (decarboxylating) from Brucella melitensis biotype 1 (strain ATCC 23456 / CCUG 17765 / NCTC 10094 / 16M).